A 584-amino-acid polypeptide reads, in one-letter code: Isopropyl malate synthase htyA (584 aa).

The Pyruvate carboxyltransferase domain maps to 39–317 (PIWLSTDLRD…ETGLDFSNLP (279 aa)).

It belongs to the alpha-IPM synthase/homocitrate synthase family. LeuA type 2 subfamily.

It catalyses the reaction 3-methyl-2-oxobutanoate + acetyl-CoA + H2O = (2S)-2-isopropylmalate + CoA + H(+). Its pathway is antifungal biosynthesis. Functionally, isopropyl malate synthase; part of the gene cluster that mediates the de novo generation of L-homotyrosine from acetyl-CoA and 4-hydroxyphenyl-pyruvate. L-homotyrosine is a building block of echinocandin B, a fungal lipidated cyclic hexapeptide that acts as an antifungal agent. L-homotyrosine 4-hydroxyphenyl-pyruvate first undergoes an aldol-type condensation by htyA with the C-2 of acetyl-CoA followed by the release of CoA to form 2-(4-hydroxybenzyl)-malate. This is followed by isomerization of 2-(4-hydroxy-benzyl)-malate to 3-(4-hydroxybenzyl)-malate by htyD. Thereafter, 3-(4-hydroxybenzyl)-malate undergoes decarboxylation and oxidation to form 2-oxo-4-(4-hydroxybenzyl)butanoic acid, coupled to reduction of NAD(+) to NADH by htyC. The product then undergoes transamination catalyzed by htyB to form L-homotyrosine. The sequence is that of Isopropyl malate synthase htyA from Aspergillus rugulosus (Emericella rugulosa).